The following is a 305-amino-acid chain: Ribosomal RNA small subunit methyltransferase H (305 aa).

Residues 49-51 (GGH), Asp-68, Phe-100, Asp-116, and Gln-123 contribute to the S-adenosyl-L-methionine site.

This sequence belongs to the methyltransferase superfamily. RsmH family.

Its subcellular location is the cytoplasm. The enzyme catalyses cytidine(1402) in 16S rRNA + S-adenosyl-L-methionine = N(4)-methylcytidine(1402) in 16S rRNA + S-adenosyl-L-homocysteine + H(+). Its function is as follows. Specifically methylates the N4 position of cytidine in position 1402 (C1402) of 16S rRNA. The protein is Ribosomal RNA small subunit methyltransferase H of Synechocystis sp. (strain ATCC 27184 / PCC 6803 / Kazusa).